Consider the following 119-residue polypeptide: Large ribosomal subunit protein uL18 (119 aa).

It belongs to the universal ribosomal protein uL18 family. In terms of assembly, part of the 50S ribosomal subunit; part of the 5S rRNA/L5/L18/L25 subcomplex. Contacts the 5S and 23S rRNAs.

This is one of the proteins that bind and probably mediate the attachment of the 5S RNA into the large ribosomal subunit, where it forms part of the central protuberance. This is Large ribosomal subunit protein uL18 from Clostridium tetani (strain Massachusetts / E88).